Reading from the N-terminus, the 891-residue chain is Putative alpha,alpha-trehalose-phosphate synthase [UDP-forming] 100 kDa subunit (891 aa).

Residue threonine 88 is modified to Phosphothreonine. The disordered stretch occupies residues 88–126 (TGGSMTPGLGAMSPIPGSGRSSPLYTQPRSRATSPSRVR). The span at 106–124 (GRSSPLYTQPRSRATSPSR) shows a compositional bias: polar residues. Serine 108 and serine 109 each carry phosphoserine. The interval 132-613 (AAPGIGAGAL…VTGFETKLKK (482 aa)) is glycosyltransferase.

This sequence in the N-terminal section; belongs to the glycosyltransferase 20 family.

The catalysed reaction is D-glucose 6-phosphate + UDP-alpha-D-glucose = alpha,alpha-trehalose 6-phosphate + UDP + H(+). The protein is Putative alpha,alpha-trehalose-phosphate synthase [UDP-forming] 100 kDa subunit of Schizosaccharomyces pombe (strain 972 / ATCC 24843) (Fission yeast).